The sequence spans 113 residues: Hydrogenase maturation factor HypA 2 (113 aa).

Residue H2 participates in Ni(2+) binding. Positions 73, 76, 89, and 92 each coordinate Zn(2+).

This sequence belongs to the HypA/HybF family.

In terms of biological role, involved in the maturation of [NiFe] hydrogenases. Required for nickel insertion into the metal center of the hydrogenase. In Bradyrhizobium diazoefficiens (strain JCM 10833 / BCRC 13528 / IAM 13628 / NBRC 14792 / USDA 110), this protein is Hydrogenase maturation factor HypA 2.